Consider the following 256-residue polypeptide: Glutamate racemase (256 aa).

Substrate contacts are provided by residues 5 to 6 (DS) and 37 to 38 (YG). The active-site Proton donor/acceptor is Cys-69. 70–71 (NT) is a substrate binding site. Cys-181 (proton donor/acceptor) is an active-site residue. 182–183 (TH) is a binding site for substrate.

Belongs to the aspartate/glutamate racemases family.

It catalyses the reaction L-glutamate = D-glutamate. It functions in the pathway cell wall biogenesis; peptidoglycan biosynthesis. In terms of biological role, provides the (R)-glutamate required for cell wall biosynthesis. This chain is Glutamate racemase, found in Buchnera aphidicola subsp. Schizaphis graminum (strain Sg).